Here is a 222-residue protein sequence, read N- to C-terminus: Cytidylate kinase (222 aa).

An ATP-binding site is contributed by 12–20 (GPSGAGKGT).

The protein belongs to the cytidylate kinase family. Type 1 subfamily.

It localises to the cytoplasm. The enzyme catalyses CMP + ATP = CDP + ADP. The catalysed reaction is dCMP + ATP = dCDP + ADP. This chain is Cytidylate kinase, found in Methylococcus capsulatus (strain ATCC 33009 / NCIMB 11132 / Bath).